Reading from the N-terminus, the 476-residue chain is Ribulose bisphosphate carboxylase large chain (476 aa).

The propeptide occupies 1 to 2 (MS). The residue at position 3 (P3) is an N-acetylproline. An N6,N6,N6-trimethyllysine modification is found at K14. Residues N123 and T173 each contribute to the substrate site. Catalysis depends on K175, which acts as the Proton acceptor. Residue K177 participates in substrate binding. Positions 201, 203, and 204 each coordinate Mg(2+). K201 carries the N6-carboxylysine modification. Positions 295, 327, and 379 each coordinate substrate.

This sequence belongs to the RuBisCO large chain family. Type I subfamily. In terms of assembly, heterohexadecamer of 8 large chains and 8 small chains; disulfide-linked. The disulfide link is formed within the large subunit homodimers. The cofactor is Mg(2+). The disulfide bond which can form in the large chain dimeric partners within the hexadecamer appears to be associated with oxidative stress and protein turnover.

The protein localises to the plastid. It is found in the chloroplast. The enzyme catalyses 2 (2R)-3-phosphoglycerate + 2 H(+) = D-ribulose 1,5-bisphosphate + CO2 + H2O. The catalysed reaction is D-ribulose 1,5-bisphosphate + O2 = 2-phosphoglycolate + (2R)-3-phosphoglycerate + 2 H(+). Its function is as follows. RuBisCO catalyzes two reactions: the carboxylation of D-ribulose 1,5-bisphosphate, the primary event in carbon dioxide fixation, as well as the oxidative fragmentation of the pentose substrate in the photorespiration process. Both reactions occur simultaneously and in competition at the same active site. The chain is Ribulose bisphosphate carboxylase large chain from Barnadesia caryophylla (Xenophontia caryophylla).